We begin with the raw amino-acid sequence, 575 residues long: MNTKLLYRLARNLRFYKKDLIIVIISLLSVSLALLLIGNVFRNLVDQGLVLDRTAAVDKSILYICLLIIILSIASFFRSYFINNVAEKVSSQIRKEAYSNLINYEITEFEELKIGDIISRLTSDIDQISKLIVNFLSFFIRNSVMLVGSIILMFFESFKLASIVIITIPLLLIPIIKFGKHVKALSKKTLESQSLLASDINESFSNIKTIHAFGGQAAKITEFNNLLQDYLTYSAARLKIRALFFAFSMAFIFLGVTLVIWIGALDIVKGNLSSGQIISFIYYAIIAGFSSGGIFELLSEMHLPLAALERIVTIIDKSPIVHNNYSDLKPVNSISLEFKNVNFSYPSRPNLKILNNISFKIDSTQFIGIVGRSGSGKSTLMQLLLRFYVQESGIILVNNQDIALLNPNEIRKLIAYVPQEASIFSGTIKSNIMFGNDSSEEEITEIIKITGIADFTDKIPDGINAKIGEKGVRLSGGQKQRIALARALLRKPQILLLDEAMNALDSQSEQKLLSSIRDIMKGKIVISIAHRISSIESADNILIIDKGAVEAEGTHAHLLKTSDLYRTIYKEVDLL.

One can recognise an ABC transmembrane type-1 domain in the interval 20–303 (LIIVIISLLS…IFELLSEMHL (284 aa)). A run of 6 helical transmembrane segments spans residues 21–41 (IIVI…GNVF), 61–81 (ILYI…RSYF), 135–155 (FLSF…LMFF), 158–178 (FKLA…IIKF), 242–262 (ALFF…VIWI), and 277–297 (IISF…IFEL). The region spanning 336-571 (LEFKNVNFSY…SDLYRTIYKE (236 aa)) is the ABC transporter domain. Residue 371–378 (GRSGSGKS) participates in ATP binding.

The protein belongs to the ABC transporter superfamily. As to quaternary structure, homodimer.

It localises to the cell inner membrane. Functionally, part of an ABC transporter complex. Transmembrane domains (TMD) form a pore in the inner membrane and the ATP-binding domain (NBD) is responsible for energy generation. This is Putative export ATP-binding/permease protein RBE_0492 from Rickettsia bellii (strain RML369-C).